A 108-amino-acid polypeptide reads, in one-letter code: UPF0060 membrane protein YnfA (108 aa).

Over 1–5 (MLKTT) the chain is Periplasmic. Residues 6–26 (LLFFVTALCEIIGCFLPWLWL) form a helical membrane-spanning segment. Residues 27-30 (KRGA) are Cytoplasmic-facing. A helical membrane pass occupies residues 31 to 51 (SMWWLLPAAASLALFVWLLTL). The Periplasmic portion of the chain corresponds to 52-60 (HPAASGRVY). A helical membrane pass occupies residues 61–81 (AAYGGVYVCTALLWLRVVDGV). At 82–84 (RLT) the chain is on the cytoplasmic side. Residues 85–105 (VYDWCGALIALCGMLIIVVGW) form a helical membrane-spanning segment. At 106–108 (GRT) the chain is on the periplasmic side.

Belongs to the UPF0060 family.

The protein localises to the cell inner membrane. The sequence is that of UPF0060 membrane protein YnfA from Salmonella schwarzengrund (strain CVM19633).